The chain runs to 181 residues: Adenine phosphoribosyltransferase (181 aa).

It belongs to the purine/pyrimidine phosphoribosyltransferase family. As to quaternary structure, homodimer.

The protein localises to the cytoplasm. It catalyses the reaction AMP + diphosphate = 5-phospho-alpha-D-ribose 1-diphosphate + adenine. The protein operates within purine metabolism; AMP biosynthesis via salvage pathway; AMP from adenine: step 1/1. Its function is as follows. Catalyzes a salvage reaction resulting in the formation of AMP, that is energically less costly than de novo synthesis. The protein is Adenine phosphoribosyltransferase of Shewanella loihica (strain ATCC BAA-1088 / PV-4).